A 1222-amino-acid chain; its full sequence is Serine/threonine-protein kinase WNK4 (1222 aa).

The span at 1–17 (MLAPRNTETGVPMSQTE) shows a compositional bias: polar residues. The segment at 1–165 (MLAPRNTETG…DTETQAVATS (165 aa)) is disordered. The segment covering 90 to 101 (AGPTRSPPSSSK) has biased composition (low complexity). S95 carries the post-translational modification Phosphoserine. Over residues 135–152 (EPPRVPDAAARERRREQE) the composition is skewed to basic and acidic residues. Glycyl lysine isopeptide (Lys-Gly) (interchain with G-Cter in ubiquitin) cross-links involve residues K154 and K172. Residues 171-429 (LKFDIEIGRG…IQDLLAHAFF (259 aa)) enclose the Protein kinase domain. S181 provides a ligand contact to ATP. Glycyl lysine isopeptide (Lys-Gly) (interchain with G-Cter in ubiquitin) cross-links involve residues K183, K223, and K238. Residues 251–254 (TELM) and K301 contribute to the ATP site. D318 acts as the Proton acceptor in catalysis. A Glycyl lysine isopeptide (Lys-Gly) (interchain with G-Cter in ubiquitin) cross-link involves residue K325. 2 positions are modified to phosphoserine; by autocatalysis: S328 and S332. Glycyl lysine isopeptide (Lys-Gly) (interchain with G-Cter in ubiquitin) cross-links involve residues K384, K390, K447, and K451. The disordered stretch occupies residues 525 to 562 (RELEVLPPDSGPPPATVSLAPGPPSAFPPEPEEPEADQ). Residues 533–553 (DSGPPPATVSLAPGPPSAFPP) are compositionally biased toward pro residues. The tract at residues 554-564 (EPEEPEADQHQ) is interaction with KLHL3. At S572 the chain carries Phosphoserine. 4 disordered regions span residues 626-659 (RSGP…MRKN), 747-809 (DAGP…GAPF), 877-896 (SYPQ…SPPS), and 927-976 (SPGL…AQPL). Low complexity-rich tracts occupy residues 627–638 (SGPGSDFSPGDS), 757–769 (ALSP…ALPA), 793–807 (STSP…SPGA), and 877–890 (SYPQ…SLPV). Pro residues predominate over residues 935-944 (PPAPPGPLPS). Residues 953–963 (DQESLSAQTAE) show a composition bias toward polar residues. K990 is covalently cross-linked (Glycyl lysine isopeptide (Lys-Gly) (interchain with G-Cter in ubiquitin)). An RFXV motif motif is present at residues 996-999 (RFQV). A disordered region spans residues 1000–1087 (TSSKEPAEPP…SSPILSHPSP (88 aa)). S1014 carries the phosphoserine modification. The span at 1014 to 1032 (SPTLSRSLKLPSPPLTSES) shows a compositional bias: low complexity. The segment covering 1044 to 1056 (ETREALAESDRAA) has biased composition (basic and acidic residues). Glycyl lysine isopeptide (Lys-Gly) (interchain with G-Cter in ubiquitin) cross-links involve residues K1123, K1136, and K1137. The interval 1166–1222 (RRLSKGSFPTSRRNSLQRSDLPGPGIMRRNSLSGSSTGSQEQRASKGVTFAGDIGRM) is disordered. 2 stretches are compositionally biased toward polar residues: residues 1172 to 1183 (SFPTSRRNSLQR) and 1195 to 1207 (NSLS…SQEQ). Residue S1196 is modified to Phosphoserine.

The protein belongs to the protein kinase superfamily. Ser/Thr protein kinase family. WNK subfamily. In terms of assembly, interacts with the C-terminal region of KCNJ1. Interacts with WNK1 and WNK3. Interacts with KLHL3. Mg(2+) serves as cofactor. In terms of processing, autophosphorylated at Ser-328 and Ser-332, promoting its activation. Phosphorylated by WNK1 and WNK3. Phosphorylated at Ser-572 in a MAP3K15/ASK3-dependent process in response to osmotic stress or hypotonic low-chloride stimulation. Post-translationally, ubiquitinated by the BCR(KLHL3) complex, leading to its degradation. Also ubiquitinated by the BCR(KLHL2) complex. Locates to the distal convoluted tubule, the medullary collecting duct and the cortical collecting duct of the kidney. Expressed in pancreatic duct.

It localises to the cell junction. The protein localises to the tight junction. It catalyses the reaction L-seryl-[protein] + ATP = O-phospho-L-seryl-[protein] + ADP + H(+). The enzyme catalyses L-threonyl-[protein] + ATP = O-phospho-L-threonyl-[protein] + ADP + H(+). Its activity is regulated as follows. Activation requires autophosphorylation of Ser-328 and Ser-332. Autophosphorylation and subsequent activation is inhibited by increases in intracellular ionic strength: Cl(-) potently inhibits WNK4 kinase activity via direct binding. Also inhibited by K(+) ions. Serine/threonine-protein kinase component of the WNK4-SPAK/OSR1 kinase cascade, which acts as a key regulator of ion transport in the distal nephron and blood pressure. The WNK4-SPAK/OSR1 kinase cascade is composed of WNK4, which mediates phosphorylation and activation of downstream kinases OXSR1/OSR1 and STK39/SPAK. Following activation, OXSR1/OSR1 and STK39/SPAK catalyze phosphorylation of ion cotransporters, such as SLC12A1/NKCC2, SLC12A2/NKCC1, SLC12A3/NCC, SLC12A5/KCC2 or SLC12A6/KCC3, regulating their activity. Acts as a molecular switch that regulates the balance between renal salt reabsorption and K(+) secretion by modulating the activities of renal transporters and channels, including the Na-Cl cotransporter SLC12A3/NCC and the K(+) channel, KCNJ1/ROMK. Regulates NaCl reabsorption in the distal nephron by activating the thiazide-sensitive Na-Cl cotransporter SLC12A3/NCC in distal convoluted tubule cells of kidney: activates SLC12A3/NCC in a OXSR1/OSR1- and STK39/SPAK-dependent process. Also acts as a scaffold protein independently of its protein kinase activity: negatively regulates cell membrane localization of various transporters and channels (CFTR, KCNJ1/ROMK, SLC4A4, SLC26A9 and TRPV4) by clathrin-dependent endocytosis. Also inhibits the activity of the epithelial Na(+) channel (ENaC) SCNN1A, SCNN1B, SCNN1D in a inase-independent mechanism. May also phosphorylate NEDD4L. This Mus musculus (Mouse) protein is Serine/threonine-protein kinase WNK4.